The chain runs to 575 residues: DNA-directed RNA polymerase subunit beta' (575 aa).

Positions 64, 66, 85, and 88 each coordinate Zn(2+). 3 residues coordinate Mg(2+): Asp440, Asp442, and Asp444.

The protein belongs to the RNA polymerase beta' chain family. RpoC1 subfamily. In terms of assembly, in plastids the minimal PEP RNA polymerase catalytic core is composed of four subunits: alpha, beta, beta', and beta''. When a (nuclear-encoded) sigma factor is associated with the core the holoenzyme is formed, which can initiate transcription. Mg(2+) serves as cofactor. Zn(2+) is required as a cofactor.

The protein resides in the plastid. It carries out the reaction RNA(n) + a ribonucleoside 5'-triphosphate = RNA(n+1) + diphosphate. Its function is as follows. DNA-dependent RNA polymerase catalyzes the transcription of DNA into RNA using the four ribonucleoside triphosphates as substrates. In Euglena longa (Euglenophycean alga), this protein is DNA-directed RNA polymerase subunit beta'.